Here is a 141-residue protein sequence, read N- to C-terminus: Hemoglobin subunit alpha (141 aa).

The 141-residue stretch at 1–141 (VLSPADKSNV…VSTVLTSKYR (141 aa)) folds into the Globin domain. Phosphoserine is present on Ser3. N6-succinyllysine is present on residues Lys7 and Lys11. Lys16 is modified (N6-acetyllysine; alternate). At Lys16 the chain carries N6-succinyllysine; alternate. Tyr24 carries the phosphotyrosine modification. Phosphoserine is present on Ser35. Position 40 is an N6-succinyllysine (Lys40). Position 49 is a phosphoserine (Ser49). His58 contacts O2. His87 contributes to the heme b binding site. Ser102 carries the post-translational modification Phosphoserine. Phosphothreonine is present on Thr108. Ser124 and Ser131 each carry phosphoserine. 2 positions are modified to phosphothreonine: Thr134 and Thr137. Ser138 carries the phosphoserine modification.

Belongs to the globin family. In terms of assembly, heterotetramer of two alpha chains and two beta chains. Red blood cells.

Its function is as follows. Involved in oxygen transport from the lung to the various peripheral tissues. Functionally, hemopressin acts as an antagonist peptide of the cannabinoid receptor CNR1. Hemopressin-binding efficiently blocks cannabinoid receptor CNR1 and subsequent signaling. The polypeptide is Hemoglobin subunit alpha (HBA) (Mico argentatus (Silvery marmoset)).